We begin with the raw amino-acid sequence, 87 residues long: Toxin CngtIII (87 aa).

A signal peptide spans Met-1–Ala-19. The region spanning Lys-20 to Ser-85 is the LCN-type CS-alpha/beta domain. 4 disulfide bridges follow: Cys-31-Cys-84, Cys-35-Cys-60, Cys-44-Cys-65, and Cys-48-Cys-67.

Belongs to the long (4 C-C) scorpion toxin superfamily. Sodium channel inhibitor family. Beta subfamily. As to expression, expressed by the venom gland.

It localises to the secreted. Beta toxins bind voltage-independently at site-4 of sodium channels (Nav) and shift the voltage of activation toward more negative potentials thereby affecting sodium channel activation and promoting spontaneous and repetitive firing. The protein is Toxin CngtIII of Centruroides noxius (Mexican scorpion).